A 265-amino-acid chain; its full sequence is Early E4 31 kDa protein (265 aa).

The protein belongs to the adenoviridae E4 30 to 34 kDa protein family. In terms of assembly, interacts with E1B-55k.

It localises to the host nucleus. It is found in the host cytoplasm. Its function is as follows. Plays a major role to prevent cellular inhibition of viral genome replication by nuclear bodies. Assembles an SCF-like E3 ubiquitin ligase complex based on the cellular proteins ELOB, ELOC, CUL5 and RBX1, in cooperation with viral E1B-55K. This viral RING-type ligase ubiquitinates cellular substrates prior to proteasomal degradation: p53/TP53, LIG4, MRE11-RAD50-NBS1 (MRN) complex, ITGA3, DAXX and BLM. This is Early E4 31 kDa protein from Canine adenovirus serotype 1 (strain RI261) (CAdV-1).